Consider the following 590-residue polypeptide: Aspartate--tRNA(Asp/Asn) ligase (590 aa).

L-aspartate is bound at residue Glu172. The segment at 196–199 is aspartate; sequence QLFK. Arg218 is a binding site for L-aspartate. ATP contacts are provided by residues 218 to 220 and Gln227; that span reads RDE. An L-aspartate-binding site is contributed by His449. Residue Glu484 coordinates ATP. Arg491 contributes to the L-aspartate binding site. Residue 536–539 coordinates ATP; sequence GVDR.

The protein belongs to the class-II aminoacyl-tRNA synthetase family. Type 1 subfamily. As to quaternary structure, homodimer.

It localises to the cytoplasm. The catalysed reaction is tRNA(Asx) + L-aspartate + ATP = L-aspartyl-tRNA(Asx) + AMP + diphosphate. In terms of biological role, aspartyl-tRNA synthetase with relaxed tRNA specificity since it is able to aspartylate not only its cognate tRNA(Asp) but also tRNA(Asn). Reaction proceeds in two steps: L-aspartate is first activated by ATP to form Asp-AMP and then transferred to the acceptor end of tRNA(Asp/Asn). The chain is Aspartate--tRNA(Asp/Asn) ligase from Francisella tularensis subsp. tularensis (strain WY96-3418).